The primary structure comprises 338 residues: Methionine import ATP-binding protein MetN 1 (338 aa).

One can recognise an ABC transporter domain in the interval 2-241; sequence IELHQVSKSF…AKHATTKRFV (240 aa). An ATP-binding site is contributed by 38–45; it reads GYSGAGKS.

This sequence belongs to the ABC transporter superfamily. Methionine importer (TC 3.A.1.24) family. As to quaternary structure, the complex is composed of two ATP-binding proteins (MetN), two transmembrane proteins (MetI) and a solute-binding protein (MetQ).

The protein resides in the cell membrane. The catalysed reaction is L-methionine(out) + ATP + H2O = L-methionine(in) + ADP + phosphate + H(+). It carries out the reaction D-methionine(out) + ATP + H2O = D-methionine(in) + ADP + phosphate + H(+). Functionally, part of the ABC transporter complex MetNIQ involved in methionine import. Responsible for energy coupling to the transport system. The polypeptide is Methionine import ATP-binding protein MetN 1 (Listeria monocytogenes serovar 1/2a (strain ATCC BAA-679 / EGD-e)).